We begin with the raw amino-acid sequence, 249 residues long: tRNA pseudouridine synthase A (249 aa).

The active-site Nucleophile is Asp52. Tyr110 lines the substrate pocket.

Belongs to the tRNA pseudouridine synthase TruA family. As to quaternary structure, homodimer.

The enzyme catalyses uridine(38/39/40) in tRNA = pseudouridine(38/39/40) in tRNA. Its function is as follows. Formation of pseudouridine at positions 38, 39 and 40 in the anticodon stem and loop of transfer RNAs. The chain is tRNA pseudouridine synthase A from Syntrophomonas wolfei subsp. wolfei (strain DSM 2245B / Goettingen).